The sequence spans 380 residues: MIDFPIKYRLIKKEKYTGARLGEIITPHGTFPTPMFMPVGTQATVKTQSPEELQQMGSGIILANTYHLWLRPGDELIAKAGGLHKFMNWDQAILTDSGGFQVYSLAEKRDISEEGVTFKNHLNGSKMFLSPEKAISVQNNLGSDIMMSFDECPQFYQPYDYVKKSIERTSRWAERGLKAHRRPHDQGLFGIVQGAGFEDLRRQSSHDLVSMDFPGYSIGGLAVGETHEEMNAVLDFTVPLLPENKPRYLMGVGAPDSLIDGVIRGVDMYDCVLPTRIARNGTCMTSNGRLVVKNAAYAEDFSPIDPECDCYTCKNYTRAYVRHLLKADETFGIRLTSYHNLYFLVNLMARVRQAIVDDNLLEFRQDFIEKYGYNASNRNF.

The active-site Proton acceptor is Asp-96. Substrate contacts are provided by residues Asp-96–Phe-100, Asp-150, Gln-193, and Gly-220. The tract at residues Gly-251–Ser-257 is RNA binding. Catalysis depends on Asp-270, which acts as the Nucleophile. Residues Thr-275–Arg-279 are RNA binding; important for wobble base 34 recognition. Cys-308, Cys-310, Cys-313, and His-339 together coordinate Zn(2+).

It belongs to the queuine tRNA-ribosyltransferase family. In terms of assembly, homodimer. Within each dimer, one monomer is responsible for RNA recognition and catalysis, while the other monomer binds to the replacement base PreQ1. It depends on Zn(2+) as a cofactor.

It catalyses the reaction 7-aminomethyl-7-carbaguanine + guanosine(34) in tRNA = 7-aminomethyl-7-carbaguanosine(34) in tRNA + guanine. Its pathway is tRNA modification; tRNA-queuosine biosynthesis. Its function is as follows. Catalyzes the base-exchange of a guanine (G) residue with the queuine precursor 7-aminomethyl-7-deazaguanine (PreQ1) at position 34 (anticodon wobble position) in tRNAs with GU(N) anticodons (tRNA-Asp, -Asn, -His and -Tyr). Catalysis occurs through a double-displacement mechanism. The nucleophile active site attacks the C1' of nucleotide 34 to detach the guanine base from the RNA, forming a covalent enzyme-RNA intermediate. The proton acceptor active site deprotonates the incoming PreQ1, allowing a nucleophilic attack on the C1' of the ribose to form the product. After dissociation, two additional enzymatic reactions on the tRNA convert PreQ1 to queuine (Q), resulting in the hypermodified nucleoside queuosine (7-(((4,5-cis-dihydroxy-2-cyclopenten-1-yl)amino)methyl)-7-deazaguanosine). The protein is Queuine tRNA-ribosyltransferase of Streptococcus thermophilus (strain CNRZ 1066).